The sequence spans 315 residues: Ribosomal RNA large subunit methyltransferase F (315 aa).

Belongs to the methyltransferase superfamily. METTL16/RlmF family.

Its subcellular location is the cytoplasm. The enzyme catalyses adenosine(1618) in 23S rRNA + S-adenosyl-L-methionine = N(6)-methyladenosine(1618) in 23S rRNA + S-adenosyl-L-homocysteine + H(+). Functionally, specifically methylates the adenine in position 1618 of 23S rRNA. The polypeptide is Ribosomal RNA large subunit methyltransferase F (Aeromonas salmonicida (strain A449)).